The chain runs to 182 residues: Guanylate kinase (182 aa).

A Guanylate kinase-like domain is found at 2-180 (GTLTVITGPS…ALLKLEGLMG (179 aa)). Residue 9–16 (GPSGVGKG) coordinates ATP.

It belongs to the guanylate kinase family.

The protein resides in the cytoplasm. It catalyses the reaction GMP + ATP = GDP + ADP. It carries out the reaction dZMP + ATP = dZDP + ADP. Its pathway is purine metabolism. In terms of biological role, essential for recycling GMP and indirectly, cGMP. Functionally, (Microbial infection) Catalyzes the phosphorylation of dZMP to dZDP, when the bacterium is infected by a phage that produces the substrate for the synthesis of dZTP (2- amino-2'-deoxyadenosine 5'-triphosphate), which is then used by the phage as a DNA polymerase substrate. The protein is Guanylate kinase of Parasynechococcus marenigrum (strain WH8102).